We begin with the raw amino-acid sequence, 382 residues long: Small ribosomal subunit protein mS35 (382 aa).

The segment covering 363–375 (GRGGKALPGGKGG) has biased composition (gly residues). The segment at 363–382 (GRGGKALPGGKGGKMQRSKR) is disordered.

This sequence belongs to the mitochondrion-specific ribosomal protein mS35 family. Component of the mitochondrial small ribosomal subunit (mt-SSU). Mature N.crassa 74S mitochondrial ribosomes consist of a small (37S) and a large (54S) subunit. The 37S small subunit contains a 16S ribosomal RNA (16S mt-rRNA) and 32 different proteins. The 54S large subunit contains a 23S rRNA (23S mt-rRNA) and 42 different proteins.

It is found in the mitochondrion. Its function is as follows. Component of the mitochondrial ribosome (mitoribosome), a dedicated translation machinery responsible for the synthesis of mitochondrial genome-encoded proteins, including at least some of the essential transmembrane subunits of the mitochondrial respiratory chain. The mitoribosomes are attached to the mitochondrial inner membrane and translation products are cotranslationally integrated into the membrane. This chain is Small ribosomal subunit protein mS35 (rsm24), found in Neurospora crassa (strain ATCC 24698 / 74-OR23-1A / CBS 708.71 / DSM 1257 / FGSC 987).